A 413-amino-acid chain; its full sequence is Zinc finger protein 821 (413 aa).

The tract at residues 26 to 83 (RQAMMKTDFPGDLGSQRQAIQQLRDQDSSSSDSEGDEEETTQDEVSSHTSEEDGGVVK) is disordered. Over residues 58–67 (SEGDEEETTQ) the composition is skewed to acidic residues. C2H2-type zinc fingers lie at residues 117-141 (QLCQ…VYQH) and 151-173 (YMCP…LLIH). Residues 260-367 (ALRRQNEPLE…EKMDMMLRAQ (108 aa)) are a coiled coil. The interval 279–320 (RTAKKSRRDNETPEEREVRRMRDREAKRLQRMQETDEQRARR) is disordered.

Belongs to the krueppel C2H2-type zinc-finger protein family.

The protein localises to the nucleus. In terms of biological role, may be involved in transcriptional regulation. The chain is Zinc finger protein 821 (Znf821) from Mus musculus (Mouse).